We begin with the raw amino-acid sequence, 175 residues long: MIDDDGYRPNVGIVICNRQGEVLWARRYGQHSWQFPQGGINPGETPEQAMYRELFEEVGLNKKDVRILASTRNWLRYKLPKRLVRWDTKPVCIGQKQRWFLLQLMCNEAEINMQRSSTPEFDGWRWVSYWYPVRQVVSFKRDVYRRVMKEFAATVMPVQEVAPPRVPPAYRRKRG.

Residues 6–149 (GYRPNVGIVI…KRDVYRRVMK (144 aa)) enclose the Nudix hydrolase domain. Positions 38 to 59 (GGINPGETPEQAMYRELFEEVG) match the Nudix box motif.

The protein belongs to the Nudix hydrolase family. RppH subfamily. A divalent metal cation serves as cofactor.

In terms of biological role, accelerates the degradation of transcripts by removing pyrophosphate from the 5'-end of triphosphorylated RNA, leading to a more labile monophosphorylated state that can stimulate subsequent ribonuclease cleavage. The polypeptide is RNA pyrophosphohydrolase (Yersinia pseudotuberculosis serotype O:1b (strain IP 31758)).